Consider the following 271-residue polypeptide: Formamidopyrimidine-DNA glycosylase (271 aa).

Catalysis depends on Pro-2, which acts as the Schiff-base intermediate with DNA. The Proton donor role is filled by Glu-3. Lys-58 (proton donor; for beta-elimination activity) is an active-site residue. 3 residues coordinate DNA: His-91, Arg-110, and Arg-152. The FPG-type zinc finger occupies Arg-237–Arg-271. Arg-261 functions as the Proton donor; for delta-elimination activity in the catalytic mechanism.

The protein belongs to the FPG family. Monomer. Zn(2+) serves as cofactor.

It carries out the reaction Hydrolysis of DNA containing ring-opened 7-methylguanine residues, releasing 2,6-diamino-4-hydroxy-5-(N-methyl)formamidopyrimidine.. It catalyses the reaction 2'-deoxyribonucleotide-(2'-deoxyribose 5'-phosphate)-2'-deoxyribonucleotide-DNA = a 3'-end 2'-deoxyribonucleotide-(2,3-dehydro-2,3-deoxyribose 5'-phosphate)-DNA + a 5'-end 5'-phospho-2'-deoxyribonucleoside-DNA + H(+). Involved in base excision repair of DNA damaged by oxidation or by mutagenic agents. Acts as a DNA glycosylase that recognizes and removes damaged bases. Has a preference for oxidized purines, such as 7,8-dihydro-8-oxoguanine (8-oxoG). Has AP (apurinic/apyrimidinic) lyase activity and introduces nicks in the DNA strand. Cleaves the DNA backbone by beta-delta elimination to generate a single-strand break at the site of the removed base with both 3'- and 5'-phosphates. In Hahella chejuensis (strain KCTC 2396), this protein is Formamidopyrimidine-DNA glycosylase.